The sequence spans 1066 residues: Pumilio homolog 2 (1066 aa).

The interval 1-260 (MNHDFQALAL…TVGLFDYNSQ (260 aa)) is interaction with SNAPIN. Phosphoserine is present on residues S67, S70, S82, and S102. Disordered stretches follow at residues 106-203 (KLDS…GPLP), 368-408 (TANQ…AESL), and 490-551 (TGST…SASL). The segment covering 119-133 (RDAETDGPEKGDQKG) has biased composition (basic and acidic residues). Phosphoserine occurs at positions 136, 177, and 181. At T183 the chain carries Phosphothreonine. Low complexity predominate over residues 368–383 (TANQQAASQAQPGQQQ). Over residues 394–406 (ITPSQGQQGQQAE) the composition is skewed to polar residues. T395 is modified (phosphothreonine). Low complexity predominate over residues 503-514 (QPPQQQQQQQQP). Positions 515–525 (STNLQSNSFYG) are enriched in polar residues. Low complexity predominate over residues 526-540 (SSSLTNSSQSSSLFS). 2 positions are modified to phosphoserine: S587 and S592. The disordered stretch occupies residues 620 to 650 (SPIGMPLPSQTPGHSLTPPPSLSSHGSSSSL). The span at 630–650 (TPGHSLTPPPSLSSHGSSSSL) shows a compositional bias: low complexity. Residue R674 is modified to Omega-N-methylarginine. Residues S684 and S700 each carry the phosphoserine modification. The PUM-HD domain occupies 706-1048 (GRSRLLEDFR…HILAKLEKYY (343 aa)). 8 Pumilio repeats span residues 726–761 (DLIG…IVFN), 762–797 (EILQ…ALAT), 798–835 (RIRG…EMVK), 836–871 (ELDG…FIID), 872–907 (AFKG…PILE), 908–943 (ELHQ…KIVS), 944–979 (EIRG…LLID), and 980–1022 (EVCC…IIMH). The adenine-nucleotide binding in RNA target stretch occupies residues 741 to 745 (SRFIQ). The segment at 777–781 (NYVIQ) is uracil-nucleotide binding in RNA target. The adenine-nucleotide binding in RNA target stretch occupies residues 813-817 (CRVIQ). Residues 851-855 (NHVVQ) are non-specific-nucleotide binding in RNA target. The interval 887 to 891 (CRVIQ) is adenine-nucleotide binding in RNA target. Residues 923-927 (NYVIQ) form a uracil-nucleotide binding in RNA target region. Residues 959-963 (SNVVE) form a guanine-nucleotide binding in RNA target region. The interval 1002–1006 (NYVVQ) is uracil-nucleotide binding in RNA target.

In terms of assembly, homodimer; homodimerizes in vitro. Interacts with DAZ1, DAZL and NANOS1 via its pumilio repeats. Interacts with NANOS3. Interacts with SNAPIN. Recruits the CCR4-POP2-NOT deadenylase leading to translational inhibition and mRNA degradation. Interacts with DDX20. In case of viral infection, interacts with DHX58. As to expression, widely expressed. Expressed in embryonic stem cells, heart, kidney, lung, skin, intestine, spleen and thymus. Expressed at intermediate level in brain and liver. Weakly or not expressed in muscles and stomach. Expressed at various stages of myeloid and lymphoid cell development. In the testis expressed in the spermatogoni, spermatocytes, spermatids and Sertoli cells.

The protein localises to the cytoplasm. It is found in the cytoplasmic granule. The protein resides in the perinuclear region. Functionally, sequence-specific RNA-binding protein that acts as a post-transcriptional repressor by binding the 3'-UTR of mRNA targets. Binds to an RNA consensus sequence, the Pumilio Response Element (PRE), 5'-UGUANAUA-3', that is related to the Nanos Response Element (NRE). Mediates post-transcriptional repression of transcripts via different mechanisms: acts via direct recruitment of the CCR4-POP2-NOT deadenylase leading to translational inhibition and mRNA degradation. Also mediates deadenylation-independent repression by promoting accessibility of miRNAs. Acts as a post-transcriptional repressor of E2F3 mRNAs by binding to its 3'-UTR and facilitating miRNA regulation. Plays a role in cytoplasmic sensing of viral infection. Represses a program of genes necessary to maintain genomic stability such as key mitotic, DNA repair and DNA replication factors. Its ability to repress those target mRNAs is regulated by the lncRNA NORAD (non-coding RNA activated by DNA damage) which, due to its high abundance and multitude of PUMILIO binding sites, is able to sequester a significant fraction of PUM1 and PUM2 in the cytoplasm. May regulate DCUN1D3 mRNA levels. May support proliferation and self-renewal of stem cells. Binds specifically to miRNA MIR199A precursor, with PUM1, regulates miRNA MIR199A expression at a postranscriptional level. The polypeptide is Pumilio homolog 2 (Pum2) (Mus musculus (Mouse)).